The sequence spans 428 residues: Histone deacetylase 3 (428 aa).

Positions 3-316 (NRTSYFYDPD…WTFETSLLLE (314 aa)) are histone deacetylase. His-17, Gly-21, and Lys-25 together coordinate 1D-myo-inositol 1,4,5,6-tetrakisphosphate. His-135 is an active-site residue. 3 residues coordinate Zn(2+): Asp-170, His-172, and Asp-259. Residue Arg-265 coordinates 1D-myo-inositol 1,4,5,6-tetrakisphosphate. A disordered region spans residues 385–428 (LNYERNDEPDPDERGAEENYTRPEAANEFYDGDHDNDKESDVEI). Composition is skewed to basic and acidic residues over residues 386 to 405 (NYERNDEPDPDERGAEENYT) and 415 to 428 (DGDHDNDKESDVEI).

It belongs to the histone deacetylase family. HD type 1 subfamily.

The protein localises to the nucleus. The protein resides in the chromosome. Its subcellular location is the cytoplasm. It is found in the cytosol. The catalysed reaction is N(6)-acetyl-L-lysyl-[histone] + H2O = L-lysyl-[histone] + acetate. Its activity is regulated as follows. Inositol tetraphosphate (1D-myo-inositol 1,4,5,6-tetrakisphosphate) promotes the histone deacetylase activity by acting as an intermolecular glue between hdac3 and N-Cor repressor complex components. In terms of biological role, responsible for the deacetylation of lysine residues on the N-terminal part of the core histones (H2A, H2B, H3 and H4). Histone deacetylation gives a tag for epigenetic repression and plays an important role in transcriptional regulation, cell cycle progression and developmental events. Histone deacetylases act via the formation of large multiprotein complexes, such as N-Cor repressor complex, which activate the histone deacetylase activity. May play a role in the regulation of the circadian clock in a deacetylase activity-independent manner. This chain is Histone deacetylase 3 (hdac3), found in Tetraodon nigroviridis (Spotted green pufferfish).